The sequence spans 87 residues: MANIKSQIKRNKTNEKARLRNQAIRSAVRTEIRKFHAAIDGGDKAAAESQLRVASRALDKAVTKGVFHRNNAANKKSSLARAFNKLG.

The disordered stretch occupies residues 1–20; that stretch reads MANIKSQIKRNKTNEKARLR.

The protein belongs to the bacterial ribosomal protein bS20 family.

Binds directly to 16S ribosomal RNA. This chain is Small ribosomal subunit protein bS20, found in Corynebacterium efficiens (strain DSM 44549 / YS-314 / AJ 12310 / JCM 11189 / NBRC 100395).